The sequence spans 386 residues: Succinate--CoA ligase [ADP-forming] subunit beta (386 aa).

The ATP-grasp domain occupies 9 to 244; that stretch reads KELLRDYGVP…LNEEDEKEIE (236 aa). Residues K46, 53-55, E99, C102, and E107 contribute to the ATP site; that span reads GRG. Residues N199 and D213 each contribute to the Mg(2+) site. Substrate-binding positions include N264 and 321–323; that span reads GIM.

Belongs to the succinate/malate CoA ligase beta subunit family. Heterotetramer of two alpha and two beta subunits. Mg(2+) is required as a cofactor.

It catalyses the reaction succinate + ATP + CoA = succinyl-CoA + ADP + phosphate. It carries out the reaction GTP + succinate + CoA = succinyl-CoA + GDP + phosphate. The protein operates within carbohydrate metabolism; tricarboxylic acid cycle; succinate from succinyl-CoA (ligase route): step 1/1. Succinyl-CoA synthetase functions in the citric acid cycle (TCA), coupling the hydrolysis of succinyl-CoA to the synthesis of either ATP or GTP and thus represents the only step of substrate-level phosphorylation in the TCA. The beta subunit provides nucleotide specificity of the enzyme and binds the substrate succinate, while the binding sites for coenzyme A and phosphate are found in the alpha subunit. The polypeptide is Succinate--CoA ligase [ADP-forming] subunit beta (Alkaliphilus oremlandii (strain OhILAs) (Clostridium oremlandii (strain OhILAs))).